The sequence spans 561 residues: Transmembrane protein 209 (561 aa).

Phosphoserine occurs at positions 9 and 11. Residues 28 to 48 traverse the membrane as a helical segment; the sequence is VVLAWGLLNVSMAGMIYTEMT. N-linked (GlcNAc...) asparagine glycosylation is present at N57. The chain crosses the membrane as a helical span at residues 60 to 80; that stretch reads YWPLWYIELALASLFSLNALF. A Phosphoserine modification is found at S98. Disordered regions lie at residues 120-156 and 196-233; these read LAATQISPSPPSPSIQGQSVLSYSPSRSPSTSPKFAT and SLSPSSPYPTTVGPVESSGLRARYRSPPTAYNSPTDKE. Over residues 138–152 the composition is skewed to low complexity; that stretch reads SVLSYSPSRSPSTSP. Phosphoserine occurs at positions 201 and 248. The segment at 250 to 270 is disordered; sequence EEKQHRVKLGSPDSTSPSTSP. The segment covering 260–270 has biased composition (low complexity); that stretch reads SPDSTSPSTSP. An N-linked (GlcNAc...) asparagine glycan is attached at N274. S278 is modified (phosphoserine).

Interacts with NUP205.

It localises to the membrane. The protein resides in the nucleus envelope. It is found in the golgi apparatus. The protein localises to the cytoplasm. In terms of biological role, nuclear envelope protein which in association with NUP205, may be involved in nuclear transport of various nuclear proteins in addition to MYC. The protein is Transmembrane protein 209 (Tmem209) of Rattus norvegicus (Rat).